Reading from the N-terminus, the 513-residue chain is Putative zinc finger CCCH domain-containing protein 51 (513 aa).

The disordered stretch occupies residues 155 to 180; it reads SMPRNSPNAGRNLVGHPHSSSKSSSK. Residues 170 to 180 show a composition bias toward low complexity; sequence HPHSSSKSSSK. The C3H1-type zinc-finger motif lies at 176–204; the sequence is KSSSKPCHFHFFRGYCKKGVNCQFFHGSV. In terms of domain architecture, HTH OST-type spans 218 to 299; the sequence is SLSKLDMEIR…HGQYHVVLVE (82 aa). Residues 325–411 enclose the RRM domain; it reads NQIYMTFPVH…SELRMTWLKS (87 aa).

The protein is Putative zinc finger CCCH domain-containing protein 51 of Oryza sativa subsp. japonica (Rice).